The following is a 211-amino-acid chain: AILGVAIFAAPSLADFHSHPPIHKPPVYTPPVHKPPIHKPPVYTPPVHKPPVYTPPVHKPPSEYKPPVEATNSVTEDHYPIHKPPVYKPPVQKPAPEHKPPVHKPPIHKPPVHNTPSVTDDHYPAHPIHKPQPIHRPPVHKPPTEHKPPVHEPATEHKPSPVYQPPKTEKPVPEHKPPHLPPIVVRPPPTHKPNPPYGHHPRHPPVENTGN.

An N-terminal signal peptide occupies residues 1–14; it reads AILGVAIFAAPSLA. 2 stretches are compositionally biased toward pro residues: residues 25–59 and 82–93; these read PPVYTPPVHKPPIHKPPVYTPPVHKPPVYTPPVHK and HKPPVYKPPVQK. A disordered region spans residues 25-211; it reads PPVYTPPVHK…RHPPVENTGN (187 aa). 2 stretches are compositionally biased toward basic residues: residues 101 to 111 and 127 to 139; these read PVHKPPIHKPP and PIHKPQPIHRPPV. 2 stretches are compositionally biased toward basic and acidic residues: residues 142–159 and 167–177; these read PPTEHKPPVHEPATEHKP and KTEKPVPEHKP. Positions 179–198 are enriched in pro residues; it reads HLPPIVVRPPPTHKPNPPYG.

It belongs to the plant proline-rich protein superfamily. ENOD12 family.

Its subcellular location is the secreted. The protein localises to the cell wall. The chain is Proline-rich 33 kDa extensin-related protein from Daucus carota (Wild carrot).